The sequence spans 94 residues: uncharacterized protein (94 aa).

This is an uncharacterized protein from Saccharolobus islandicus (Sulfolobus islandicus).